Reading from the N-terminus, the 65-residue chain is Large ribosomal subunit protein bL35 (65 aa).

Positions Met1 to Arg30 are disordered. Positions Lys12 to Arg30 are enriched in basic residues.

Belongs to the bacterial ribosomal protein bL35 family.

This Alteromonas mediterranea (strain DSM 17117 / CIP 110805 / LMG 28347 / Deep ecotype) protein is Large ribosomal subunit protein bL35.